The primary structure comprises 172 residues: Ribosome maturation factor RimM (172 aa).

The PRC barrel domain occupies 96-168 (EGEFYYHQII…RVDVELMEGL (73 aa)).

Belongs to the RimM family. In terms of assembly, binds ribosomal protein uS19.

It localises to the cytoplasm. Functionally, an accessory protein needed during the final step in the assembly of 30S ribosomal subunit, possibly for assembly of the head region. Essential for efficient processing of 16S rRNA. May be needed both before and after RbfA during the maturation of 16S rRNA. It has affinity for free ribosomal 30S subunits but not for 70S ribosomes. The sequence is that of Ribosome maturation factor RimM from Streptococcus pyogenes serotype M28 (strain MGAS6180).